The sequence spans 317 residues: Tenomodulin (317 aa).

At 1–30 (MAKNPPENCEGCHILNAEALKSKKICKSLK) the chain is on the cytoplasmic side. A helical; Signal-anchor for type II membrane protein membrane pass occupies residues 31 to 50 (ICGLVFGILALTLIVLFWGS). Residues 51–317 (KHFWPEVSKK…WWVARMLGRV (267 aa)) lie on the Extracellular side of the membrane. One can recognise a BRICHOS domain in the interval 93–186 (GNGTDETLEV…ICDNVTMYWI (94 aa)). A glycan (N-linked (GlcNAc...) asparagine) is linked at N94. Cysteines 120 and 178 form a disulfide. The N-linked (GlcNAc...) asparagine glycan is linked to N180. S239 bears the Phosphoserine mark.

This sequence belongs to the chondromodulin-1 family. As to expression, widely expressed with highest expression in tendons and ligaments, in the diaphragm, eye and skeletal muscle. Expressed in neuronal cells of all brain regions. Very low expression, if any, in glial cells.

It is found in the membrane. The protein resides in the nucleus envelope. Functionally, may be an angiogenesis inhibitor. The sequence is that of Tenomodulin (Tnmd) from Mus musculus (Mouse).